A 91-amino-acid chain; its full sequence is Early E3B 10.4 kDa protein (91 aa).

Residues 1-22 form the signal peptide; that stretch reads MIPRVFILLTLVALFCACSTLA. Residues 23-34 lie on the Lumenal side of the membrane; sequence AVSHIEVDCIPA. The chain crosses the membrane as a helical span at residues 35 to 60; the sequence is FTVYLLYGFVTLTLICSLITVVIAFI. Residues 61 to 91 lie on the Cytoplasmic side of the membrane; it reads QCIDWVCVRFAYLRHHPQYRDRTIAELLRIL.

It belongs to the adenoviridae E3B family.

It localises to the host endoplasmic reticulum membrane. In terms of biological role, down-regulates the EGF receptor. In Homo sapiens (Human), this protein is Early E3B 10.4 kDa protein.